A 438-amino-acid polypeptide reads, in one-letter code: Glucose-6-phosphate isomerase (438 aa).

Glu-289 (proton donor) is an active-site residue. Active-site residues include His-310 and Lys-424.

This sequence belongs to the GPI family.

It localises to the cytoplasm. The catalysed reaction is alpha-D-glucose 6-phosphate = beta-D-fructose 6-phosphate. The protein operates within carbohydrate biosynthesis; gluconeogenesis. It participates in carbohydrate degradation; glycolysis; D-glyceraldehyde 3-phosphate and glycerone phosphate from D-glucose: step 2/4. Functionally, catalyzes the reversible isomerization of glucose-6-phosphate to fructose-6-phosphate. This chain is Glucose-6-phosphate isomerase, found in Oenococcus oeni (strain ATCC BAA-331 / PSU-1).